The sequence spans 839 residues: Probable beta-glucosidase I (839 aa).

A glycan (N-linked (GlcNAc...) asparagine) is linked at Asn197. Asp225 is a catalytic residue. In terms of domain architecture, PA14 spans 395 to 555; sequence DGKTGFSFKV…GQEELISNAV (161 aa). N-linked (GlcNAc...) asparagine glycosylation is present at Asn620.

This sequence belongs to the glycosyl hydrolase 3 family.

It is found in the secreted. It carries out the reaction Hydrolysis of terminal, non-reducing beta-D-glucosyl residues with release of beta-D-glucose.. It participates in glycan metabolism; cellulose degradation. Functionally, beta-glucosidases are one of a number of cellulolytic enzymes involved in the degradation of cellulosic biomass. Catalyzes the last step releasing glucose from the inhibitory cellobiose. The polypeptide is Probable beta-glucosidase I (bglI) (Aspergillus flavus (strain ATCC 200026 / FGSC A1120 / IAM 13836 / NRRL 3357 / JCM 12722 / SRRC 167)).